A 901-amino-acid polypeptide reads, in one-letter code: PGC-1 and ERR-induced regulator in muscle protein 1 (901 aa).

Disordered stretches follow at residues 29 to 511, 564 to 671, and 731 to 752; these read QAGL…MPAS, SLEG…MGPG, and RHQEGRSQAPLLKAGSVPAPPP. A compositionally biased stretch (polar residues) spans 100–112; it reads GQQTPSTSAQSEA. Residues 157-178 show a composition bias toward low complexity; the sequence is GEPAGSPESPVHSAAPQRSPGS. Composition is skewed to polar residues over residues 267-276, 347-379, 387-418, 426-457, and 465-484; these read LSTSVSTTEQ, DESQSTSAFNAQPNEPQSTPTFSPQPDEPQSTP, EPQSTSAFNAQPNEPQSTLAFSPQPDEPQSTP, EPQSTPAFNVQPNEPQSTPAFSPQPNEPQSTP, and EPQSTPAFNTQPNEPQSTPT. The span at 608-624 shows a compositional bias: low complexity; it reads PSSEEPGSGEVSGPLSP.

It is found in the cytoplasm. Its subcellular location is the nucleus. Regulates the expression of selective PPARGC1A/B and ESRRA/B/G target genes with roles in glucose and lipid metabolism, energy transfer, contractile function, muscle mitochondrial biogenesis and oxidative capacity. Required for the efficient induction of MT-CO2, MT-CO3, COX4I1, TFB1M, TFB2M, POLRMT and SIRT3 by PPARGC1A. Positively regulates the PPARGC1A/ESRRG-induced expression of CKMT2, TNNI3 and SLC2A4 and negatively regulates the PPARGC1A/ESRRG-induced expression of PDK4. The protein is PGC-1 and ERR-induced regulator in muscle protein 1 (PERM1) of Bos taurus (Bovine).